Consider the following 46-residue polypeptide: Large ribosomal subunit protein bL36 (46 aa).

This sequence belongs to the bacterial ribosomal protein bL36 family.

The polypeptide is Large ribosomal subunit protein bL36 (Klebsiella pneumoniae (strain 342)).